The sequence spans 348 residues: Ubiquitin thioesterase OTU1 (348 aa).

Over residues 1–11 the composition is skewed to basic residues; the sequence is MFGPAKGRHFG. The segment at 1–39 is disordered; that stretch reads MFGPAKGRHFGVHPAPGFPGGVSQQAAGTKAGPAGAWPV. The UBX-like stretch occupies residues 50 to 128; that stretch reads RCKAKDGTHV…IIEEDQTRPR (79 aa). Residues 149 to 274 form the OTU domain; it reads LTRTVVPADN…GIHYDPLQRN (126 aa). Residues 154–160 are cys-loop; that stretch reads VPADNSC. Asp157 is a catalytic residue. Cys160 acts as the Nucleophile in catalysis. Positions 213–223 are variable-loop; that stretch reads IKRDDTWGGAI. A his-loop region spans residues 263–267; sequence YDGIH. Ile266 contributes to the substrate binding site. The active site involves His267. Positions 291–296 are S2 site; sequence DIVLVQ. Residues 318 to 342 form a C2H2-type zinc finger; sequence LRCMVCQKGLTGQAEAREHAKETGH. His342 is an active-site residue.

As to quaternary structure, interacts with VCP; the interaction is direct. Interacts with FAF2/UBXD8. Interacts with DERL1; however interaction is dependent on the UBAX-like region, suggesting that it may be indirect. Interacts with PLAA, UBXN6 and VCP; may form a complex involved in macroautophagy.

It is found in the cytoplasm. The catalysed reaction is Thiol-dependent hydrolysis of ester, thioester, amide, peptide and isopeptide bonds formed by the C-terminal Gly of ubiquitin (a 76-residue protein attached to proteins as an intracellular targeting signal).. Functionally, hydrolase that can remove conjugated ubiquitin from proteins and participates in endoplasmic reticulum-associated degradation (ERAD) for misfolded lumenal proteins. May act by triming the ubiquitin chain on the associated substrate to facilitate their threading through the VCP/p97 pore. Ubiquitin moieties on substrates may present a steric impediment to the threading process when the substrate is transferred to the VCP pore and threaded through VCP's axial channel. Mediates deubiquitination of 'Lys-27'-, 'Lys-29'- and 'Lys-33'-linked polyubiquitin chains. Also able to hydrolyze 'Lys-11'-linked ubiquitin chains. Cleaves both polyubiquitin and di-ubiquitin. May play a role in macroautophagy, regulating for instance the clearance of damaged lysosomes. May recruit PLAA, UBXN6 and VCP to damaged lysosome membranes decorated with K48-linked ubiquitin chains and remove these chains allowing autophagosome formation. This is Ubiquitin thioesterase OTU1 (YOD1) from Homo sapiens (Human).